We begin with the raw amino-acid sequence, 754 residues long: 5-methyltetrahydropteroyltriglutamate--homocysteine methyltransferase (754 aa).

Residues 17–20 and Lys-117 contribute to the 5-methyltetrahydropteroyltri-L-glutamate site; that span reads RELK. L-homocysteine-binding positions include 431–433 and Glu-484; that span reads IGS. L-methionine-binding positions include 431-433 and Glu-484; that span reads IGS. Residues 515 to 516 and Trp-561 each bind 5-methyltetrahydropteroyltri-L-glutamate; that span reads RC. Asp-599 contributes to the L-homocysteine binding site. Position 599 (Asp-599) interacts with L-methionine. Glu-605 is a binding site for 5-methyltetrahydropteroyltri-L-glutamate. The Zn(2+) site is built by His-641, Cys-643, and Glu-665. Catalysis depends on His-694, which acts as the Proton donor. Residue Cys-726 coordinates Zn(2+).

This sequence belongs to the vitamin-B12 independent methionine synthase family. Requires Zn(2+) as cofactor.

The catalysed reaction is 5-methyltetrahydropteroyltri-L-glutamate + L-homocysteine = tetrahydropteroyltri-L-glutamate + L-methionine. It participates in amino-acid biosynthesis; L-methionine biosynthesis via de novo pathway; L-methionine from L-homocysteine (MetE route): step 1/1. Its function is as follows. Catalyzes the transfer of a methyl group from 5-methyltetrahydrofolate to homocysteine resulting in methionine formation. This chain is 5-methyltetrahydropteroyltriglutamate--homocysteine methyltransferase, found in Salmonella typhimurium (strain LT2 / SGSC1412 / ATCC 700720).